The sequence spans 764 residues: Kinesin-like protein KIN-14N (764 aa).

The tract at residues 1 to 50 is disordered; the sequence is MSTRATRPGMLHQKENAADAQAGKRQRTAAGSAARAPLSANAAPPAPDPA. Residues 29 to 50 show a composition bias toward low complexity; it reads AAGSAARAPLSANAAPPAPDPA. Positions 105-416 form a coiled coil; that stretch reads AEIGKLNGLL…RLHNTILELK (312 aa). Residues 418–747 enclose the Kinesin motor domain; it reads NIRVFCRVRP…LRFAARVNSC (330 aa). 498-505 contributes to the ATP binding site; sequence GQTGSGKT.

The protein belongs to the TRAFAC class myosin-kinesin ATPase superfamily. Kinesin family. KIN-14 subfamily.

The polypeptide is Kinesin-like protein KIN-14N (Oryza sativa subsp. japonica (Rice)).